A 35-amino-acid polypeptide reads, in one-letter code: MEVNILAFIATALFILVPTAFLLIIYVKTESQNKK.

The helical transmembrane segment at 5 to 25 (ILAFIATALFILVPTAFLLII) threads the bilayer.

This sequence belongs to the PsbM family. As to quaternary structure, PSII is composed of 1 copy each of membrane proteins PsbA, PsbB, PsbC, PsbD, PsbE, PsbF, PsbH, PsbI, PsbJ, PsbK, PsbL, PsbM, PsbT, PsbX, PsbY, PsbZ, Psb30/Ycf12, at least 3 peripheral proteins of the oxygen-evolving complex and a large number of cofactors. It forms dimeric complexes.

It localises to the plastid. It is found in the chloroplast thylakoid membrane. One of the components of the core complex of photosystem II (PSII). PSII is a light-driven water:plastoquinone oxidoreductase that uses light energy to abstract electrons from H(2)O, generating O(2) and a proton gradient subsequently used for ATP formation. It consists of a core antenna complex that captures photons, and an electron transfer chain that converts photonic excitation into a charge separation. This subunit is found at the monomer-monomer interface. In Panax quinquefolius (American ginseng), this protein is Photosystem II reaction center protein M.